We begin with the raw amino-acid sequence, 322 residues long: Secreted effector protein SseI (322 aa).

Interacts with host IQGAP1 and host TRIP6 (thyroid receptor-interacting protein 6).

Its subcellular location is the secreted. The protein resides in the host cytoplasm. Effector proteins function to alter host cell physiology and promote bacterial survival in host tissues. This protein is required to maintain a long-term chronic systemic infection in mice. It inhibits normal cell migration of primary macrophages and dendritic cells, by a mechanism that involves interaction with the host factor IQGAP1, an important regulator of the cytoskeleton and cell migration. Also accelerates the systemic spread of infection from the gastrointestinal tract to the bloodstream, probably by interacting with host TRIP6. In Salmonella typhimurium (strain LT2 / SGSC1412 / ATCC 700720), this protein is Secreted effector protein SseI (sseI).